Reading from the N-terminus, the 438-residue chain is Glycosyl hydrolase family 109 protein (438 aa).

Positions 1–33 (MDKTSRRDLLKLASLAGIGAGLARSQGSSKSMA) form a signal peptide, tat-type signal. NAD(+)-binding positions include 52–53 (GR), Asp-74, 125–128 (WVWH), 145–146 (EV), and Asn-174. Substrate is bound by residues Tyr-203, Arg-221, 233 to 236 (YPTH), and Tyr-315. An NAD(+)-binding site is contributed by Tyr-233. Residues 408–438 (GPLSEASVANGSAPQKFPDFTRGKWQTRQPV) are disordered.

The protein belongs to the Gfo/Idh/MocA family. Glycosyl hydrolase 109 subfamily. Requires NAD(+) as cofactor. In terms of processing, predicted to be exported by the Tat system. The position of the signal peptide cleavage has not been experimentally proven.

Its function is as follows. Glycosidase. This chain is Glycosyl hydrolase family 109 protein, found in Solibacter usitatus (strain Ellin6076).